We begin with the raw amino-acid sequence, 436 residues long: GTPase Der (436 aa).

EngA-type G domains lie at 4-167 (PVIA…PTDL) and 175-351 (IKFS…ENQN). Residues 10–17 (GRPNVGKS), 57–61 (DTGGI), 119–122 (NKAD), 181–188 (GRPNVGKS), 229–233 (DTAGI), and 294–297 (NKWD) contribute to the GTP site. The KH-like domain occupies 352–436 (RRIQSALLND…PIHLIPRQRK (85 aa)).

The protein belongs to the TRAFAC class TrmE-Era-EngA-EngB-Septin-like GTPase superfamily. EngA (Der) GTPase family. As to quaternary structure, associates with the 50S ribosomal subunit.

In terms of biological role, GTPase that plays an essential role in the late steps of ribosome biogenesis. This Latilactobacillus sakei subsp. sakei (strain 23K) (Lactobacillus sakei subsp. sakei) protein is GTPase Der.